The chain runs to 122 residues: Allatotropin (122 aa).

The signal sequence occupies residues 1-23 (MRVILAITLLFVAGSFIATASKG). A propeptide spanning residues 24 to 40 (RNYPRFFKHRMKLREIR) is cleaved from the precursor. At F53 the chain carries Phenylalanine amide. Residues 57-122 (ESPAERIPDL…GDDSKKGTIA (66 aa)) constitute a propeptide that is removed on maturation.

In terms of tissue distribution, expressed in brain and ventral ganglia but not in the retrocerebral complex (at protein level).

The protein localises to the secreted. In terms of biological role, neuropeptide stimulator of juvenile hormone synthesis. In Camponotus floridanus (Florida carpenter ant), this protein is Allatotropin.